A 58-amino-acid chain; its full sequence is Large ribosomal subunit protein bL32 (58 aa).

Disordered regions lie at residues 1–22 and 39–58; these read MAVP…HWKR and LSGR…DDEE.

This sequence belongs to the bacterial ribosomal protein bL32 family.

The protein is Large ribosomal subunit protein bL32 of Crocosphaera subtropica (strain ATCC 51142 / BH68) (Cyanothece sp. (strain ATCC 51142)).